Consider the following 318-residue polypeptide: Protein-L-histidine N-pros-methyltransferase (318 aa).

The N-terminal stretch at 1–18 (MRLLAGWLCLSLASVWLA) is a signal peptide. N-linked (GlcNAc...) asparagine glycosylation is present at Asn-35. S-adenosyl-L-homocysteine-binding residues include Glu-174, Asn-210, and Tyr-295.

It belongs to the METTL9 family.

Its subcellular location is the endoplasmic reticulum. It localises to the mitochondrion. It catalyses the reaction L-histidyl-[protein] + S-adenosyl-L-methionine = N(pros)-methyl-L-histidyl-[protein] + S-adenosyl-L-homocysteine + H(+). In terms of biological role, protein-histidine N-methyltransferase that specifically catalyzes 1-methylhistidine (pros-methylhistidine) methylation of target proteins. Specifically methylates the second His of proteins with a His-x-His (HxH) motif (where 'x' is preferably a small amino acid), while exploiting the first one as a recognition signature. Catalyzes methylation of target proteins such as S100A9, NDUFB3, SLC39A5, SLC39A7, ARMC6 and DNAJB12; 1-methylhistidine modification may affect the binding of zinc and other metals to its target proteins. Constitutes the main methyltransferase for the 1-methylhistidine modification in cell. This Homo sapiens (Human) protein is Protein-L-histidine N-pros-methyltransferase.